Here is a 367-residue protein sequence, read N- to C-terminus: Nociceptin receptor (367 aa).

The Extracellular segment spans residues 1–45 (MESLFPAPYWEVLYGSHFQGNLSLLNETVPHHLLLNASHSAFLPL). N-linked (GlcNAc...) asparagine glycans are attached at residues asparagine 21, asparagine 26, and asparagine 36. Residues 46–71 (GLKVTIVGLYLAVCIGGLLGNCLVMY) form a helical membrane-spanning segment. Residues 72 to 84 (VILRHTKMKTATN) are Cytoplasmic-facing. The chain crosses the membrane as a helical span at residues 85–106 (IYIFNLALADTLVLLTLPFQGT). The Extracellular portion of the chain corresponds to 107-121 (DILLGFWPFGNALCK). The cysteines at positions 120 and 197 are disulfide-linked. A helical membrane pass occupies residues 122 to 143 (TVIAIDYYNMFTSTFTLTAMSV). At 144-162 (DRYVAICHPIRALDVRTSS) the chain is on the cytoplasmic side. A helical membrane pass occupies residues 163–185 (KAQAVNVAIWALASVVGVPVAIM). At 186–208 (GSAQVEDEEIECLVEIPAPQDYW) the chain is on the extracellular side. A helical membrane pass occupies residues 209-233 (GPVFAICIFLFSFIIPVLIISVCYS). At 234–261 (LMIRRLRGVRLLSGSREKDRNLRRITRL) the chain is on the cytoplasmic side. Residues 262–282 (VLVVVAVFVGCWTPVQVFVLV) traverse the membrane as a helical segment. Residues 283–297 (QGLGVQPGSETAVAI) are Extracellular-facing. The chain crosses the membrane as a helical span at residues 298-319 (LRFCTALGYVNSCLNPILYAFL). Topologically, residues 320 to 367 (DENFKACFRKFCCASSLHREMQVSDRVRSIAKDVGLGCKTSETVPRPA) are cytoplasmic. The S-palmitoyl cysteine moiety is linked to residue cysteine 331.

This sequence belongs to the G-protein coupled receptor 1 family. Post-translationally, phosphorylation at Ser-360 requires GRK3. As to expression, highly expressed in several brain areas, the intestine, liver and spleen. Detected in sympathetic stellate ganglion neurons.

The protein localises to the cell membrane. The protein resides in the cytoplasmic vesicle. Its function is as follows. G-protein coupled opioid receptor that functions as a receptor for the endogenous neuropeptide nociceptin. Ligand binding causes a conformation change that triggers signaling via guanine nucleotide-binding proteins (G proteins) and modulates the activity of down-stream effectors. Signaling via G proteins mediates inhibition of adenylate cyclase activity and calcium channel activity. Arrestins modulate signaling via G proteins and mediate the activation of alternative signaling pathways that lead to the activation of MAP kinases. Plays a role in modulating nociception and the perception of pain. Plays a role in the regulation of locomotor activity by the neuropeptide nociceptin. The protein is Nociceptin receptor (Oprl1) of Rattus norvegicus (Rat).